The following is a 467-amino-acid chain: Uronate isomerase (467 aa).

The protein belongs to the metallo-dependent hydrolases superfamily. Uronate isomerase family.

It carries out the reaction D-glucuronate = D-fructuronate. The enzyme catalyses aldehydo-D-galacturonate = keto-D-tagaturonate. It functions in the pathway carbohydrate metabolism; pentose and glucuronate interconversion. The sequence is that of Uronate isomerase from Geobacillus thermodenitrificans (strain NG80-2).